The primary structure comprises 341 residues: Protein YIPF3 (341 aa).

Residues 1–146 (MANSSGSSRN…PVKMISFPQK (146 aa)) are Cytoplasmic-facing. Residues 26–46 (GGGAAVIDMENMDDTSGSSFE) form a disordered region. Residues 147–167 (IAGELYGPLMLVFTMVAILLH) form a helical membrane-spanning segment. The Lumenal segment spans residues 168-185 (GMKSSGTIIREGTLMGTA). A helical membrane pass occupies residues 186–206 (IGTCFGYWLGVSSFIYFLAYL). The Cytoplasmic segment spans residues 207–212 (CNAQIT). A helical transmembrane segment spans residues 213 to 233 (MLQTLSLLGYGLFGHCIVLFI). Residues 234–242 (TYNIHFHSL) lie on the Lumenal side of the membrane. The chain crosses the membrane as a helical span at residues 243 to 263 (FYIFWLCIGGLSTLRMVAVLL). The Cytoplasmic portion of the chain corresponds to 264 to 272 (SRTVGHTQR). Residues 273–293 (LIVCGTMAALHMLFLLYLHFA) form a helical membrane-spanning segment. At 294-341 (YHKVVEGILDTLDGQNVPLPIQRVARDLPVGPNTVLNATVQVLLAHSR) the chain is on the lumenal side. The N-linked (GlcNAc...) asparagine glycan is linked to asparagine 330.

It belongs to the YIP1 family.

Its subcellular location is the cell membrane. The protein localises to the golgi apparatus. The protein resides in the cis-Golgi network membrane. It is found in the cytoplasm. Involved in the maintenance of the Golgi structure. May play a role in hematopoiesis. The chain is Protein YIPF3 (yipf3) from Xenopus laevis (African clawed frog).